Reading from the N-terminus, the 423-residue chain is Imidazolonepropionase (423 aa).

Fe(3+)-binding residues include histidine 78 and histidine 80. Residues histidine 78 and histidine 80 each contribute to the Zn(2+) site. The 4-imidazolone-5-propanoate site is built by arginine 87, tyrosine 150, and histidine 183. An N-formimidoyl-L-glutamate-binding site is contributed by tyrosine 150. Histidine 247 provides a ligand contact to Fe(3+). Histidine 247 contributes to the Zn(2+) binding site. Glutamate 250 provides a ligand contact to 4-imidazolone-5-propanoate. Fe(3+) is bound at residue aspartate 322. Position 322 (aspartate 322) interacts with Zn(2+). N-formimidoyl-L-glutamate-binding residues include asparagine 324 and glycine 326. Serine 327 serves as a coordination point for 4-imidazolone-5-propanoate.

The protein belongs to the metallo-dependent hydrolases superfamily. HutI family. Requires Zn(2+) as cofactor. Fe(3+) is required as a cofactor.

Its subcellular location is the cytoplasm. It carries out the reaction 4-imidazolone-5-propanoate + H2O = N-formimidoyl-L-glutamate. It functions in the pathway amino-acid degradation; L-histidine degradation into L-glutamate; N-formimidoyl-L-glutamate from L-histidine: step 3/3. Functionally, catalyzes the hydrolytic cleavage of the carbon-nitrogen bond in imidazolone-5-propanoate to yield N-formimidoyl-L-glutamate. It is the third step in the universal histidine degradation pathway. The polypeptide is Imidazolonepropionase (Bacillus cytotoxicus (strain DSM 22905 / CIP 110041 / 391-98 / NVH 391-98)).